The following is a 467-amino-acid chain: A-type ATP synthase subunit B (467 aa).

The tract at residues 95–114 (GKGQPRDHMPLPPPEDFRDV) is disordered.

The protein belongs to the ATPase alpha/beta chains family. As to quaternary structure, has multiple subunits with at least A(3), B(3), C, D, E, F, H, I and proteolipid K(x).

The protein localises to the cell membrane. Functionally, component of the A-type ATP synthase that produces ATP from ADP in the presence of a proton gradient across the membrane. The B chain is a regulatory subunit. The protein is A-type ATP synthase subunit B of Pyrobaculum islandicum (strain DSM 4184 / JCM 9189 / GEO3).